A 218-amino-acid chain; its full sequence is MEPGFWHDKWQSQQIGFHQSDINPFLVKHWESLKLEGKGKVFVPLCGKSLDMEFLAAQGHEVIGSELSALAVSQFFEAAGAKPQSRTQGEHVHHSAQGVTLIEGDFFTLDEELVAGCSGFYDRAALIAWPAEMRIDYVRKLAALIPAGTPGLLITLDYPQEALIGPPFAVSPNWVEEFVGEYFEVVVLESQDVLADNPRFVKKAVPWLNEAAYLLVRK.

Residues tryptophan 10, leucine 45, glutamate 66, and arginine 123 each coordinate S-adenosyl-L-methionine.

It belongs to the class I-like SAM-binding methyltransferase superfamily. TPMT family.

Its subcellular location is the cytoplasm. The enzyme catalyses S-adenosyl-L-methionine + a thiopurine = S-adenosyl-L-homocysteine + a thiopurine S-methylether.. The polypeptide is Thiopurine S-methyltransferase (Shewanella amazonensis (strain ATCC BAA-1098 / SB2B)).